Here is a 353-residue protein sequence, read N- to C-terminus: Protein-glutamate methylesterase/protein-glutamine glutaminase 3 (353 aa).

The 118-residue stretch at 3-120 (KVLIADDSAL…SSSSDMKKVA (118 aa)) folds into the Response regulatory domain. Aspartate 54 carries the post-translational modification 4-aspartylphosphate. Residues 158 to 353 (PRPGREVTKA…AREIIRAVNR (196 aa)) form the CheB-type methylesterase domain. Catalysis depends on residues serine 173, histidine 200, and aspartate 296.

It belongs to the CheB family. Phosphorylated by CheA. Phosphorylation of the N-terminal regulatory domain activates the methylesterase activity.

The protein localises to the cytoplasm. The enzyme catalyses [protein]-L-glutamate 5-O-methyl ester + H2O = L-glutamyl-[protein] + methanol + H(+). The catalysed reaction is L-glutaminyl-[protein] + H2O = L-glutamyl-[protein] + NH4(+). In terms of biological role, involved in chemotaxis. Part of a chemotaxis signal transduction system that modulates chemotaxis in response to various stimuli. Catalyzes the demethylation of specific methylglutamate residues introduced into the chemoreceptors (methyl-accepting chemotaxis proteins or MCP) by CheR. Also mediates the irreversible deamidation of specific glutamine residues to glutamic acid. This is Protein-glutamate methylesterase/protein-glutamine glutaminase 3 from Syntrophomonas wolfei subsp. wolfei (strain DSM 2245B / Goettingen).